A 139-amino-acid chain; its full sequence is Succinate dehydrogenase assembly factor 2, mitochondrial (139 aa).

The N-terminal 28 residues, Met1–Phe28, are a transit peptide targeting the mitochondrion.

It belongs to the SDHAF2 family. Interacts with the flavoprotein subunit within the SDH catalytic dimer.

The protein resides in the mitochondrion. It is found in the mitochondrion matrix. In terms of biological role, plays an essential role in the assembly of succinate dehydrogenase (SDH), an enzyme complex (also referred to as respiratory complex II) that is a component of both the tricarboxylic acid (TCA) cycle and the mitochondrial electron transport chain, and which couples the oxidation of succinate to fumarate with the reduction of ubiquinone (coenzyme Q) to ubiquinol. Required for flavinylation (covalent attachment of FAD) of the flavoprotein subunit of the SDH catalytic dimer. This Schizosaccharomyces pombe (strain 972 / ATCC 24843) (Fission yeast) protein is Succinate dehydrogenase assembly factor 2, mitochondrial.